We begin with the raw amino-acid sequence, 499 residues long: Calcium/calmodulin-dependent protein kinase type II subunit delta (499 aa).

Alanine 2 is subject to N-acetylalanine. The 259-residue stretch at 14–272 folds into the Protein kinase domain; it reads YQLFEELGKG…ASEALKHPWI (259 aa). ATP-binding positions include 20–28 and lysine 43; that span reads LGKGAFSVV. Aspartate 136 functions as the Proton acceptor in the catalytic mechanism. Residues 283 to 292 form an autoinhibitory domain region; sequence HRQETVDCLK. Threonine 287 bears the Phosphothreonine; by autocatalysis mark. The interval 291–301 is calmodulin-binding; that stretch reads LKKFNARRKLK. Threonine 306 and threonine 307 each carry phosphothreonine; by autocatalysis. Serine 315 is modified (phosphoserine). Residue lysine 318 is modified to N6-acetyllysine. Phosphoserine is present on residues serine 319 and serine 330. Phosphothreonine is present on threonine 331. At serine 333 the chain carries Phosphoserine. Phosphothreonine is present on residues threonine 336 and threonine 337. Serine 404, serine 490, and serine 494 each carry phosphoserine.

It belongs to the protein kinase superfamily. CAMK Ser/Thr protein kinase family. CaMK subfamily. CAMK2 is composed of 4 different chains: alpha (CAMK2A), beta (CAMK2B), gamma (CAMK2G), and delta (CAMK2D). The different isoforms assemble into homo- or heteromultimeric holoenzymes composed of 12 subunits with two hexameric rings stacked one on top of the other. Interacts with RRAD and CACNB2. Autophosphorylation of Thr-287 following activation by Ca(2+)/calmodulin. Phosphorylation of Thr-287 locks the kinase into an activated state. Expressed in cardiac muscle and skeletal muscle. Isoform Delta 3, isoform Delta 2, isoform Delta 8 and isoform Delta 9 are expressed in cardiac muscle. Isoform Delta 11 is expressed in skeletal muscle.

It localises to the cell membrane. The protein localises to the sarcolemma. Its subcellular location is the sarcoplasmic reticulum membrane. The enzyme catalyses L-seryl-[protein] + ATP = O-phospho-L-seryl-[protein] + ADP + H(+). The catalysed reaction is L-threonyl-[protein] + ATP = O-phospho-L-threonyl-[protein] + ADP + H(+). Its activity is regulated as follows. Activated by Ca(2+)/calmodulin. Binding of calmodulin results in conformational change that relieves intrasteric autoinhibition and allows autophosphorylation of Thr-287 which turns the kinase in a constitutively active form and confers to the kinase a Ca(2+)-independent activity. Functionally, calcium/calmodulin-dependent protein kinase involved in the regulation of Ca(2+) homeostatis and excitation-contraction coupling (ECC) in heart by targeting ion channels, transporters and accessory proteins involved in Ca(2+) influx into the myocyte, Ca(2+) release from the sarcoplasmic reticulum (SR), SR Ca(2+) uptake and Na(+) and K(+) channel transport. Targets also transcription factors and signaling molecules to regulate heart function. In its activated form, is involved in the pathogenesis of dilated cardiomyopathy and heart failure. Contributes to cardiac decompensation and heart failure by regulating SR Ca(2+) release via direct phosphorylation of RYR2 Ca(2+) channel on 'Ser-2808'. In the nucleus, phosphorylates the MEF2 repressor HDAC4, promoting its nuclear export and binding to 14-3-3 protein, and expression of MEF2 and genes involved in the hypertrophic program. Is essential for left ventricular remodeling responses to myocardial infarction. In pathological myocardial remodeling acts downstream of the beta adrenergic receptor signaling cascade to regulate key proteins involved in ECC. Regulates Ca(2+) influx to myocytes by binding and phosphorylating the L-type Ca(2+) channel subunit beta-2 CACNB2. In addition to Ca(2+) channels, can target and regulate the cardiac sarcolemmal Na(+) channel Nav1.5/SCN5A and the K+ channel Kv4.3/KCND3, which contribute to arrhythmogenesis in heart failure. Phosphorylates phospholamban (PLN/PLB), an endogenous inhibitor of SERCA2A/ATP2A2, contributing to the enhancement of SR Ca(2+) uptake that may be important in frequency-dependent acceleration of relaxation (FDAR) and maintenance of contractile function during acidosis. May participate in the modulation of skeletal muscle function in response to exercise, by regulating SR Ca(2+) transport through phosphorylation of PLN/PLB and triadin, a ryanodine receptor-coupling factor. In response to interferon-gamma (IFN-gamma) stimulation, catalyzes phosphorylation of STAT1, stimulating the JAK-STAT signaling pathway. This chain is Calcium/calmodulin-dependent protein kinase type II subunit delta (CAMK2D), found in Homo sapiens (Human).